Consider the following 155-residue polypeptide: MAKLIFLFATLALFVLLANASIQTTVIEVDEEEDNQLWRCQRQFLQHQRLRACQRFIHRRAQFGGQPDELEDEVEDDNDDENQPRRPALRQCCNQLRQVDRPCVCPVLRQAAQQVLQRQIIQGPQQLRRLFDAARNLPNICNIPNIGACPFRAWP.

A signal peptide spans 1–20; the sequence is MAKLIFLFATLALFVLLANA. Positions 21 to 35 are excised as a propeptide; the sequence is SIQTTVIEVDEEEDN. Pyrrolidone carboxylic acid is present on Q36. 4 cysteine pairs are disulfide-bonded: C40-C103, C53-C92, C93-C141, and C105-C149. The disordered stretch occupies residues 64-86; that stretch reads GGQPDELEDEVEDDNDDENQPRR. Acidic residues predominate over residues 68–81; it reads DELEDEVEDDNDDE. Positions 69–82 are excised as a propeptide; it reads ELEDEVEDDNDDEN. At Q83 the chain carries Pyrrolidone carboxylic acid. P155 is a propeptide.

Belongs to the 2S seed storage albumins family. As to quaternary structure, heterodimer of a small A and a large B chain linked by disulfide bonds.

Heat stable 2S seed storage protein having sweetness-inducing activity. In Capparis masaikai (Mabinlang), this protein is Sweet protein mabinlin-2.